A 228-amino-acid chain; its full sequence is Orotidine 5'-phosphate decarboxylase (228 aa).

Residues aspartate 20, lysine 42, 70-79 (DFKVADIPET), serine 127, 180-190 (PGVGAQGGDPG), glycine 202, and arginine 203 contribute to the substrate site. Lysine 72 acts as the Proton donor in catalysis.

This sequence belongs to the OMP decarboxylase family. Type 1 subfamily. Homodimer.

The enzyme catalyses orotidine 5'-phosphate + H(+) = UMP + CO2. Its pathway is pyrimidine metabolism; UMP biosynthesis via de novo pathway; UMP from orotate: step 2/2. Its function is as follows. Catalyzes the decarboxylation of orotidine 5'-monophosphate (OMP) to uridine 5'-monophosphate (UMP). In Methanothermobacter thermautotrophicus (strain ATCC 29096 / DSM 1053 / JCM 10044 / NBRC 100330 / Delta H) (Methanobacterium thermoautotrophicum), this protein is Orotidine 5'-phosphate decarboxylase (pyrF).